The chain runs to 391 residues: Stearoyl-[acyl-carrier-protein] 9-desaturase 5, chloroplastic (391 aa).

The tract at residues 1-20 (MAFAPSHTASPSYCGVAQGG) is disordered. The N-terminal 32 residues, 1–32 (MAFAPSHTASPSYCGVAQGGRRSNGMSPVVAM), are a transit peptide targeting the chloroplast. 6 residues coordinate Fe cation: Glu-133, Glu-171, His-174, Glu-224, Glu-257, and His-260.

It belongs to the fatty acid desaturase type 2 family. As to quaternary structure, homodimer. The cofactor is Fe(2+).

The protein localises to the plastid. The protein resides in the chloroplast. The catalysed reaction is octadecanoyl-[ACP] + 2 reduced [2Fe-2S]-[ferredoxin] + O2 + 2 H(+) = (9Z)-octadecenoyl-[ACP] + 2 oxidized [2Fe-2S]-[ferredoxin] + 2 H2O. The protein operates within lipid metabolism; fatty acid metabolism. Functionally, converts stearoyl-ACP to oleoyl-ACP by introduction of a cis double bond between carbons 9 and 10 of the acyl chain. In Oryza sativa subsp. indica (Rice), this protein is Stearoyl-[acyl-carrier-protein] 9-desaturase 5, chloroplastic.